A 795-amino-acid chain; its full sequence is Phenylalanine--tRNA ligase beta subunit (795 aa).

A tRNA-binding domain is found at 39-148 (AGTFNGVKVG…IDAPIGMDFR (110 aa)). The region spanning 401–476 (PKPNKVALRR…RIYGYDNIPN (76 aa)) is the B5 domain. Mg(2+) is bound by residues Asp454, Asp460, Glu463, and Glu464. The 94-residue stretch at 701–794 (SKFPANRRDI…VSEKFGASLR (94 aa)) folds into the FDX-ACB domain.

Belongs to the phenylalanyl-tRNA synthetase beta subunit family. Type 1 subfamily. Tetramer of two alpha and two beta subunits. It depends on Mg(2+) as a cofactor.

It is found in the cytoplasm. It catalyses the reaction tRNA(Phe) + L-phenylalanine + ATP = L-phenylalanyl-tRNA(Phe) + AMP + diphosphate + H(+). This is Phenylalanine--tRNA ligase beta subunit from Vibrio vulnificus (strain YJ016).